A 1373-amino-acid chain; its full sequence is DNA-directed RNA polymerase subunit beta'' (1373 aa).

Zn(2+)-binding residues include cysteine 224, cysteine 296, cysteine 303, and cysteine 306.

This sequence belongs to the RNA polymerase beta' chain family. RpoC2 subfamily. In terms of assembly, in plastids the minimal PEP RNA polymerase catalytic core is composed of four subunits: alpha, beta, beta', and beta''. When a (nuclear-encoded) sigma factor is associated with the core the holoenzyme is formed, which can initiate transcription. Requires Zn(2+) as cofactor.

The protein resides in the plastid. It is found in the chloroplast. It carries out the reaction RNA(n) + a ribonucleoside 5'-triphosphate = RNA(n+1) + diphosphate. In terms of biological role, DNA-dependent RNA polymerase catalyzes the transcription of DNA into RNA using the four ribonucleoside triphosphates as substrates. In Amborella trichopoda, this protein is DNA-directed RNA polymerase subunit beta''.